The primary structure comprises 239 residues: Probable transcriptional regulatory protein BPUM_0743 (239 aa).

Belongs to the TACO1 family. YeeN subfamily.

The protein resides in the cytoplasm. The sequence is that of Probable transcriptional regulatory protein BPUM_0743 from Bacillus pumilus (strain SAFR-032).